We begin with the raw amino-acid sequence, 406 residues long: MSNNPEMNYTSKELDAMSNEELARLGTELDGVTVAYRKERFPVEGDPASKRASRTVGIWFGIGIVSALAFLAVYLFMPWEYKGLGEDGLWIYTFYTPLLGLTSGLAILSLGIGVIFYIKKIIPSEISVQRRHDGPSEEIDRRTITALLNDSWETSTLGRRKVLKSMLGIGGVLAGLTIIAPLGGMVKNPWKKGELGIQGDGTLWTSGWTLHEKGVKLYLGRDTGVTAEKHETSVGTHYSTQGVSRLIRMRPEDLAAAAMETVFPLPAEFVNDGDKYDASADVYEEQMHSIHGPRNAVMLIRLRNSDANKVIEREGQEDFHYGDYYAYSKICTHIGCPTSLYEAQTNRILCPCHQSQFDALHYGKPVFGPAARALPQLPITVDEEGYLVAAGNFIEPVGPAFWERRS.

The next 3 membrane-spanning stretches (helical) occupy residues 56–76 (VGIW…VYLF), 98–118 (LLGL…IFYI), and 166–186 (MLGI…GGMV). The Rieske domain maps to 291-388 (HGPRNAVMLI…ITVDEEGYLV (98 aa)). Residues Cys-331, His-333, Cys-350, and His-353 each contribute to the [2Fe-2S] cluster site. The cysteines at positions 336 and 352 are disulfide-linked.

Belongs to the Rieske iron-sulfur protein family. As to quaternary structure, the cytochrome bc1 complex is composed of a cytochrome b (QcrB), the Rieske iron-sulfur protein (QcrA) and a diheme cytochrome c (QcrC) subunit. The bc1 complex forms a supercomplex with cytochrome c oxidase (cytochrome aa3). The cofactor is [2Fe-2S] cluster.

The protein resides in the cell membrane. Functionally, iron-sulfur subunit of the cytochrome bc1 complex, an essential component of the respiratory electron transport chain required for ATP synthesis. The bc1 complex catalyzes the oxidation of menaquinol and the reduction of cytochrome c in the respiratory chain. The bc1 complex operates through a Q-cycle mechanism that couples electron transfer to generation of the proton gradient that drives ATP synthesis. The protein is Cytochrome bc1 complex Rieske iron-sulfur subunit (qcrA) of Corynebacterium diphtheriae (strain ATCC 700971 / NCTC 13129 / Biotype gravis).